The primary structure comprises 95 residues: MLHTLHRSPWLTDFAALLRLLSEGDELLLLQDGVTAAVDGNRYLESLRNAPIKVYALNEDLIARGLTGQILNDIIPIDYTDFVRLTVKHSSQMAW.

The protein belongs to the DsrH/TusB family. In terms of assembly, heterohexamer, formed by a dimer of trimers. The hexameric TusBCD complex contains 2 copies each of TusB, TusC and TusD. The TusBCD complex interacts with TusE.

Its subcellular location is the cytoplasm. In terms of biological role, part of a sulfur-relay system required for 2-thiolation of 5-methylaminomethyl-2-thiouridine (mnm(5)s(2)U) at tRNA wobble positions. The chain is Protein TusB from Shigella flexneri.